The following is a 617-amino-acid chain: Serine/threonine-protein kinase par-4 (617 aa).

Over residues 1 to 11 (MDAPSTSSGAQ) the composition is skewed to polar residues. The disordered stretch occupies residues 1 to 59 (MDAPSTSSGAQSKLLMPGDDEADEDHQNRGDPNLQQKQKIQLNVDPDYDDDEDDDCFID). Residues 46–57 (PDYDDDEDDDCF) are compositionally biased toward acidic residues. Positions 183–446 (YMWGGQIGTG…CLETMIHPWF (264 aa)) constitute a Protein kinase domain. Residues 189–197 (IGTGSYGKV) and Lys212 each bind ATP. Residue Asp310 is the Proton acceptor of the active site. Residues 523-617 (LEAKPGDGPD…CIFRSRTDSA (95 aa)) are disordered. Pro residues predominate over residues 587–597 (DPPPTAAPGAP).

The protein belongs to the protein kinase superfamily. CAMK Ser/Thr protein kinase family. LKB1 subfamily. In terms of assembly, interacts with strd-1. Mg(2+) is required as a cofactor. Mn(2+) serves as cofactor. Expressed in the gonads, oocytes and early embryos (at protein level).

It localises to the cytoplasm. It is found in the cell cortex. The enzyme catalyses L-seryl-[protein] + ATP = O-phospho-L-seryl-[protein] + ADP + H(+). It catalyses the reaction L-threonyl-[protein] + ATP = O-phospho-L-threonyl-[protein] + ADP + H(+). Functionally, required for cytoplasmic partitioning and asymmetric cell division in early embryogenesis. Controls the asymmetric cell division of the Q.p neuroblast lineage. Involved in mediating cell polarization via regulation of anillin family scaffold proteins. Phosphorylates and restricts the asymmetry effectors mex-5 and mex-6 to the anterior cytoplasm of the zygote and maintains these phosphorylations until fertilization. May phosphorylate par-1. Required for strd-1 localization to the cell cortex of early embryos and may be required for strd-1 protein stabilization. May regulate the integrity of the early embryonic cortex in a strd-1-dependent manner. Phosphorylates and regulates aak-2 in response to oxidative stress and during dauer development. May also play a role in motility, behavioral response, regulation of lifespan and dauer formation through this pathway. Required to establish germline stem cell (GSC) quiescence during dauer development. Acts downstream of unc-40 in dendrite outgrowth. May play a role in cell shedding during embryogenesis, probably by phosphorylating pig-1. The polypeptide is Serine/threonine-protein kinase par-4 (par-4) (Caenorhabditis elegans).